The following is a 361-amino-acid chain: Phospho-N-acetylmuramoyl-pentapeptide-transferase (361 aa).

10 consecutive transmembrane segments (helical) span residues 21-41, 73-93, 97-117, 134-154, 168-188, 200-220, 237-257, 264-284, 289-309, and 338-358; these read YITL…FLVG, TMGG…WADL, FVWV…VDDW, YFWQ…TATV, LVLP…IVGT, GLAI…AYVA, AGEL…FLWF, VFMG…VAVI, IVLF…MLQV, and QVVV…LSTL.

The protein belongs to the glycosyltransferase 4 family. MraY subfamily. Requires Mg(2+) as cofactor.

It is found in the cell inner membrane. It carries out the reaction UDP-N-acetyl-alpha-D-muramoyl-L-alanyl-gamma-D-glutamyl-meso-2,6-diaminopimeloyl-D-alanyl-D-alanine + di-trans,octa-cis-undecaprenyl phosphate = di-trans,octa-cis-undecaprenyl diphospho-N-acetyl-alpha-D-muramoyl-L-alanyl-D-glutamyl-meso-2,6-diaminopimeloyl-D-alanyl-D-alanine + UMP. It participates in cell wall biogenesis; peptidoglycan biosynthesis. In terms of biological role, catalyzes the initial step of the lipid cycle reactions in the biosynthesis of the cell wall peptidoglycan: transfers peptidoglycan precursor phospho-MurNAc-pentapeptide from UDP-MurNAc-pentapeptide onto the lipid carrier undecaprenyl phosphate, yielding undecaprenyl-pyrophosphoryl-MurNAc-pentapeptide, known as lipid I. The chain is Phospho-N-acetylmuramoyl-pentapeptide-transferase from Methylobacillus flagellatus (strain ATCC 51484 / DSM 6875 / VKM B-1610 / KT).